A 209-amino-acid chain; its full sequence is Ribosomal RNA large subunit methyltransferase E (209 aa).

S-adenosyl-L-methionine-binding residues include G63, W65, D83, D99, and D124. K164 serves as the catalytic Proton acceptor. The region spanning 191-209 is the TRAM domain; that stretch reads EASRGRSREVYIVATGYKG.

Belongs to the class I-like SAM-binding methyltransferase superfamily. RNA methyltransferase RlmE family.

Its subcellular location is the cytoplasm. It carries out the reaction uridine(2552) in 23S rRNA + S-adenosyl-L-methionine = 2'-O-methyluridine(2552) in 23S rRNA + S-adenosyl-L-homocysteine + H(+). Specifically methylates the uridine in position 2552 of 23S rRNA at the 2'-O position of the ribose in the fully assembled 50S ribosomal subunit. The sequence is that of Ribosomal RNA large subunit methyltransferase E from Haemophilus influenzae (strain ATCC 51907 / DSM 11121 / KW20 / Rd).